The chain runs to 85 residues: Putative membrane protein insertion efficiency factor (85 aa).

Belongs to the UPF0161 family.

It is found in the cell membrane. In terms of biological role, could be involved in insertion of integral membrane proteins into the membrane. The protein is Putative membrane protein insertion efficiency factor of Buchnera aphidicola subsp. Schizaphis graminum (strain Sg).